The chain runs to 204 residues: CASP-like protein 2A1 (204 aa).

Residues 1–11 (MEKSNDHDKAS) are compositionally biased toward basic and acidic residues. The segment at 1 to 25 (MEKSNDHDKASHGGSGGGATEKWEE) is disordered. Over 1–32 (MEKSNDHDKASHGGSGGGATEKWEETSPGIRT) the chain is Cytoplasmic. A helical membrane pass occupies residues 33–53 (AETMLRLAPVGLCVAALVVML). The Extracellular portion of the chain corresponds to 54–74 (KDSETNEFGSISYSNLTAFRY). Asparagine 68 is a glycosylation site (N-linked (GlcNAc...) asparagine). A helical membrane pass occupies residues 75 to 95 (LVHANGICAGYSLLSAAIAAM). The Cytoplasmic portion of the chain corresponds to 96–113 (PRSSSTMPRVWTFFCLDQ). A helical membrane pass occupies residues 114–134 (LLTYLVLAAGAVSAEVLYLAY). Residues 135–155 (NGDSAITWSDACSSYGGFCHR) lie on the Extracellular side of the membrane. A helical transmembrane segment spans residues 156-176 (ATASVIITFFVVCFYILLSLI). At 177 to 204 (SSYKLFTRFDPPSIVDSDKTLEVAVFGS) the chain is on the cytoplasmic side.

Belongs to the Casparian strip membrane proteins (CASP) family. As to quaternary structure, homodimer and heterodimers.

It is found in the cell membrane. The protein is CASP-like protein 2A1 of Arabidopsis lyrata subsp. lyrata (Lyre-leaved rock-cress).